Reading from the N-terminus, the 72-residue chain is VKRPMNAFMVGSQIERRKIMEQSPDMHNAEISKRLGKRWKLLKGSDKIPFIREAERLRIKHMADYPDYKYRP.

The HMG box DNA-binding region spans 1–69 (VKRPMNAFMV…KHMADYPDYK (69 aa)).

It is found in the nucleus. The sequence is that of SRY-related protein AES2 from Alligator mississippiensis (American alligator).